The following is a 254-amino-acid chain: Segregation and condensation protein A (254 aa).

The protein belongs to the ScpA family. In terms of assembly, component of a cohesin-like complex composed of ScpA, ScpB and the Smc homodimer, in which ScpA and ScpB bind to the head domain of Smc. The presence of the three proteins is required for the association of the complex with DNA.

The protein resides in the cytoplasm. Its function is as follows. Participates in chromosomal partition during cell division. May act via the formation of a condensin-like complex containing Smc and ScpB that pull DNA away from mid-cell into both cell halves. The chain is Segregation and condensation protein A from Brevibacillus brevis (strain 47 / JCM 6285 / NBRC 100599).